The sequence spans 366 residues: Chorismate synthase (366 aa).

Arg48 is an NADP(+) binding site. Residues 125-127, 241-242, Gly285, 300-304, and Arg326 each bind FMN; these read RSS, NA, and KPTSS.

It belongs to the chorismate synthase family. In terms of assembly, homotetramer. Requires FMNH2 as cofactor.

The catalysed reaction is 5-O-(1-carboxyvinyl)-3-phosphoshikimate = chorismate + phosphate. The protein operates within metabolic intermediate biosynthesis; chorismate biosynthesis; chorismate from D-erythrose 4-phosphate and phosphoenolpyruvate: step 7/7. In terms of biological role, catalyzes the anti-1,4-elimination of the C-3 phosphate and the C-6 proR hydrogen from 5-enolpyruvylshikimate-3-phosphate (EPSP) to yield chorismate, which is the branch point compound that serves as the starting substrate for the three terminal pathways of aromatic amino acid biosynthesis. This reaction introduces a second double bond into the aromatic ring system. The polypeptide is Chorismate synthase (Roseobacter denitrificans (strain ATCC 33942 / OCh 114) (Erythrobacter sp. (strain OCh 114))).